The primary structure comprises 656 residues: Chaperone protein HtpG (656 aa).

Residues 1-364 (MSEQNPTDSK…SADLPLNVSR (364 aa)) form an a; substrate-binding region. A b region spans residues 365–583 (EILQESRDVK…EGELSPQMIQ (219 aa)). Positions 584-656 (MLKQMGQDVP…LRRVNELLMK (73 aa)) are c.

The protein belongs to the heat shock protein 90 family. In terms of assembly, homodimer.

The protein resides in the cytoplasm. Molecular chaperone. Has ATPase activity. This chain is Chaperone protein HtpG, found in Psychrobacter arcticus (strain DSM 17307 / VKM B-2377 / 273-4).